Here is a 417-residue protein sequence, read N- to C-terminus: Lipoyl synthase, mitochondrial (417 aa).

A mitochondrion-targeting transit peptide spans M1–Y26. The interval A27–N61 is disordered. Residues A44 to D58 are compositionally biased toward polar residues. [4Fe-4S] cluster contacts are provided by C134, C139, C145, C165, C169, C172, and S380. In terms of domain architecture, Radical SAM core spans G148–L369. Residues E398–R417 form a disordered region.

This sequence belongs to the radical SAM superfamily. Lipoyl synthase family. Requires [4Fe-4S] cluster as cofactor.

The protein localises to the mitochondrion. It carries out the reaction [[Fe-S] cluster scaffold protein carrying a second [4Fe-4S](2+) cluster] + N(6)-octanoyl-L-lysyl-[protein] + 2 oxidized [2Fe-2S]-[ferredoxin] + 2 S-adenosyl-L-methionine + 4 H(+) = [[Fe-S] cluster scaffold protein] + N(6)-[(R)-dihydrolipoyl]-L-lysyl-[protein] + 4 Fe(3+) + 2 hydrogen sulfide + 2 5'-deoxyadenosine + 2 L-methionine + 2 reduced [2Fe-2S]-[ferredoxin]. It functions in the pathway protein modification; protein lipoylation via endogenous pathway; protein N(6)-(lipoyl)lysine from octanoyl-[acyl-carrier-protein]: step 2/2. Its function is as follows. Catalyzes the radical-mediated insertion of two sulfur atoms into the C-6 and C-8 positions of the octanoyl moiety bound to the lipoyl domains of lipoate-dependent enzymes, thereby converting the octanoylated domains into lipoylated derivatives. This is Lipoyl synthase, mitochondrial from Uncinocarpus reesii (strain UAMH 1704).